Reading from the N-terminus, the 948-residue chain is Sensor histidine kinase RcsC (948 aa).

At 1 to 20 (MKYLASFRTTLKVSRYLFRA) the chain is on the cytoplasmic side. A helical transmembrane segment spans residues 21–41 (LALLIWLLIAFVSVFYIVNAL). Residues 42-313 (HQRESEIRQE…PVDLVLERIR (272 aa)) are Periplasmic-facing. A helical transmembrane segment spans residues 314–334 (ILILNAILLNVLVGAGLFTLA). The Cytoplasmic segment spans residues 335-948 (RMYERRIFIP…YAERVRKTRA (614 aa)). Residues 357-425 (QFNRKIVASA…VLTSNNTNLQ (69 aa)) enclose the PAS domain. Residues 476–692 (TVSHELRTPL…QFTLRIPLYG (217 aa)) form the Histidine kinase domain. Phosphohistidine; by autocatalysis is present on histidine 479. Residues 705–805 (AGTCCWLAVR…ARIYSIELDS (101 aa)) enclose the ABL domain. Residues 826–940 (MILVVDDHPI…ALKQTLAVYA (115 aa)) enclose the Response regulatory domain. A 4-aspartylphosphate modification is found at aspartate 875.

The protein belongs to the RcsC family. As to quaternary structure, interacts with RcsD. Autophosphorylated. Activation probably requires a transfer of a phosphate group from a His in the transmitter domain to an Asp in the receiver domain.

It is found in the cell inner membrane. The enzyme catalyses ATP + protein L-histidine = ADP + protein N-phospho-L-histidine.. Its function is as follows. Component of the Rcs signaling system, which controls transcription of numerous genes. RcsC functions as a membrane-associated protein kinase that phosphorylates RcsD in response to environmental signals. The phosphoryl group is then transferred to the response regulator RcsB. This chain is Sensor histidine kinase RcsC, found in Salmonella typhi.